Here is a 149-residue protein sequence, read N- to C-terminus: 3-dehydroquinate dehydratase (149 aa).

Tyrosine 24 functions as the Proton acceptor in the catalytic mechanism. Asparagine 75, histidine 81, and aspartate 88 together coordinate substrate. Histidine 101 serves as the catalytic Proton donor. Substrate-binding positions include 102–103 (IS) and arginine 112.

This sequence belongs to the type-II 3-dehydroquinase family. As to quaternary structure, homododecamer.

The enzyme catalyses 3-dehydroquinate = 3-dehydroshikimate + H2O. It participates in metabolic intermediate biosynthesis; chorismate biosynthesis; chorismate from D-erythrose 4-phosphate and phosphoenolpyruvate: step 3/7. Catalyzes a trans-dehydration via an enolate intermediate. This chain is 3-dehydroquinate dehydratase, found in Methylobacterium radiotolerans (strain ATCC 27329 / DSM 1819 / JCM 2831 / NBRC 15690 / NCIMB 10815 / 0-1).